Consider the following 172-residue polypeptide: C-phycocyanin beta chain (172 aa).

Asparagine 72 is subject to N4-methylasparagine. (2R,3E)-phycocyanobilin-binding residues include cysteine 82 and cysteine 153.

The protein belongs to the phycobiliprotein family. Heterodimer of an alpha and a beta subunit, which further assembles into trimers and the trimers into hexamers. The basic functional unit of phycobiliproteins is a ring-shaped hexamer formed from two back-to-back trimers contacting via the alpha chain subunits. The trimers are composed of alpha/beta subunit heterodimers arranged around a three-fold axis of symmetry. The phycoerythrins also contain a gamma subunit which is located in the center of the hexamer. In terms of processing, contains two covalently linked bilin chromophores.

It localises to the plastid. The protein resides in the chloroplast thylakoid membrane. In terms of biological role, light-harvesting photosynthetic bile pigment-protein from the phycobiliprotein complex (phycobilisome, PBS). Phycocyanin is the major phycobiliprotein in the PBS rod. The chain is C-phycocyanin beta chain (cpcB) from Pyropia haitanensis (Red seaweed).